A 163-amino-acid chain; its full sequence is NADH-quinone oxidoreductase subunit 9 (163 aa).

4Fe-4S ferredoxin-type domains are found at residues 54-84 and 94-123; these read LRRY…IDAE and TRYD…EGPN. C64, C67, C70, C74, C103, C106, C109, and C113 together coordinate [4Fe-4S] cluster.

It belongs to the complex I 23 kDa subunit family. In terms of assembly, NDH-1 is composed of at least 14 different subunits, Nqo1 to Nqo14. The complex has a L-shaped structure, with the hydrophobic arm (subunits Nqo7, Nqo8, Nqo10 to Nqo14) embedded in the inner membrane and the hydrophilic peripheral arm (subunits Nqo1 to Nqo6, Nqo9) protruding into the bacterial cytoplasm. The hydrophilic domain contains all the redox centers. [4Fe-4S] cluster serves as cofactor.

The protein localises to the cell inner membrane. It carries out the reaction a quinone + NADH + 5 H(+)(in) = a quinol + NAD(+) + 4 H(+)(out). In terms of biological role, NDH-1 shuttles electrons from NADH, via FMN and iron-sulfur (Fe-S) centers, to quinones in the respiratory chain. The immediate electron acceptor for the enzyme in this species is believed to be ubiquinone. Couples the redox reaction to proton translocation (for every two electrons transferred, four hydrogen ions are translocated across the cytoplasmic membrane), and thus conserves the redox energy in a proton gradient. This chain is NADH-quinone oxidoreductase subunit 9, found in Paracoccus denitrificans.